A 174-amino-acid polypeptide reads, in one-letter code: NADH-quinone oxidoreductase subunit B 2 (174 aa).

The [4Fe-4S] cluster site is built by C53, C54, C118, and C148.

Belongs to the complex I 20 kDa subunit family. As to quaternary structure, NDH-1 is composed of 14 different subunits. Subunits NuoB, C, D, E, F, and G constitute the peripheral sector of the complex. [4Fe-4S] cluster serves as cofactor.

The protein localises to the cell inner membrane. The catalysed reaction is a quinone + NADH + 5 H(+)(in) = a quinol + NAD(+) + 4 H(+)(out). NDH-1 shuttles electrons from NADH, via FMN and iron-sulfur (Fe-S) centers, to quinones in the respiratory chain. Couples the redox reaction to proton translocation (for every two electrons transferred, four hydrogen ions are translocated across the cytoplasmic membrane), and thus conserves the redox energy in a proton gradient. This Cereibacter sphaeroides (strain ATCC 17025 / ATH 2.4.3) (Rhodobacter sphaeroides) protein is NADH-quinone oxidoreductase subunit B 2.